Consider the following 139-residue polypeptide: Large-conductance mechanosensitive channel (139 aa).

The next 2 membrane-spanning stretches (helical) occupy residues 9-29 (AFAV…GAAF) and 79-99 (IQSV…VKAI).

Belongs to the MscL family. In terms of assembly, homopentamer.

The protein localises to the cell inner membrane. Functionally, channel that opens in response to stretch forces in the membrane lipid bilayer. May participate in the regulation of osmotic pressure changes within the cell. The sequence is that of Large-conductance mechanosensitive channel from Pseudomonas fluorescens (strain SBW25).